A 338-amino-acid chain; its full sequence is D-erythrose-4-phosphate dehydrogenase (338 aa).

11 to 12 (RI) provides a ligand contact to NAD(+). Residues 153 to 155 (SCT), Arg-199, 212 to 213 (TK), and Arg-235 each bind substrate. Catalysis depends on Cys-154, which acts as the Nucleophile. Asn-317 lines the NAD(+) pocket.

The protein belongs to the glyceraldehyde-3-phosphate dehydrogenase family. Epd subfamily. In terms of assembly, homotetramer.

The protein localises to the cytoplasm. It catalyses the reaction D-erythrose 4-phosphate + NAD(+) + H2O = 4-phospho-D-erythronate + NADH + 2 H(+). It participates in cofactor biosynthesis; pyridoxine 5'-phosphate biosynthesis; pyridoxine 5'-phosphate from D-erythrose 4-phosphate: step 1/5. Its function is as follows. Catalyzes the NAD-dependent conversion of D-erythrose 4-phosphate to 4-phosphoerythronate. The sequence is that of D-erythrose-4-phosphate dehydrogenase from Shewanella loihica (strain ATCC BAA-1088 / PV-4).